A 342-amino-acid polypeptide reads, in one-letter code: Selenide, water dikinase (342 aa).

Cys-13 is a catalytic residue. ATP contacts are provided by residues Lys-16 and 44–46; that span reads SCD. Asp-47 serves as a coordination point for Mg(2+). Residues Asp-64, Asp-87, and 134–136 each bind ATP; that span reads GHS. Asp-87 contributes to the Mg(2+) binding site. Asp-222 contributes to the Mg(2+) binding site.

The protein belongs to the selenophosphate synthase 1 family. Class I subfamily. In terms of assembly, homodimer. Requires Mg(2+) as cofactor.

The enzyme catalyses hydrogenselenide + ATP + H2O = selenophosphate + AMP + phosphate + 2 H(+). In terms of biological role, synthesizes selenophosphate from selenide and ATP. The sequence is that of Selenide, water dikinase from Agathobacter rectalis (strain ATCC 33656 / DSM 3377 / JCM 17463 / KCTC 5835 / VPI 0990) (Eubacterium rectale).